The chain runs to 325 residues: Serpentine receptor class delta-59 (325 aa).

Transmembrane regions (helical) follow at residues 14-34 (WYWPFCGVLAIIFQTILLHLI), 45-65 (LKIFLYNTSCVQIALITFAFL), 75-95 (ISAAVLSLGPCSYVSPTTCFI), 97-117 (YHVFMATSFGAGSAIAITVLF), 132-152 (TYIMVLASYIAPLVVLIIPFT), 190-210 (FLSATLLLSIGAYGIPIGCLI), 235-255 (TLIHGLIVQSMLPFISYIPSF), and 275-295 (ILVSSAFPALLDPFISFYFIV).

It belongs to the nematode receptor-like protein srd family.

It localises to the membrane. This Caenorhabditis elegans protein is Serpentine receptor class delta-59 (srd-59).